The following is a 173-amino-acid chain: MMTLIMLISLITSFIFMQMKHPLAMGLMLLIQTFLTSLLTGMFVKTFWFSYVLFLIFMGGMLVLFIYVTSLSSNEMFSLSMKLFFLSLSMILMFIVFSFFFDKSIISMFINNNEMNNLFSTNSLMMEDLISLNKMYNFPTNLITLLLINYLFLTLLVTVKITKKNYGPLRPMN.

The next 4 helical transmembrane spans lie at 24–44, 47–67, 81–101, and 142–162; these read AMGL…GMFV, FWFS…LFIY, MKLF…SFFF, and LITL…VKIT.

The protein belongs to the complex I subunit 6 family.

It is found in the mitochondrion membrane. It carries out the reaction a ubiquinone + NADH + 5 H(+)(in) = a ubiquinol + NAD(+) + 4 H(+)(out). In terms of biological role, core subunit of the mitochondrial membrane respiratory chain NADH dehydrogenase (Complex I) that is believed to belong to the minimal assembly required for catalysis. Complex I functions in the transfer of electrons from NADH to the respiratory chain. The immediate electron acceptor for the enzyme is believed to be ubiquinone. The protein is NADH-ubiquinone oxidoreductase chain 6 of Aedes aegypti (Yellowfever mosquito).